The chain runs to 373 residues: Glutamate 5-kinase (373 aa).

K15 provides a ligand contact to ATP. Residues S55, D142, and N154 each contribute to the substrate site. Residues 174 to 175 (TD) and 216 to 222 (TGGMVTK) each bind ATP. The region spanning 281–359 (SGRVIVDDGA…GEIEAILGYK (79 aa)) is the PUA domain.

The protein belongs to the glutamate 5-kinase family.

It localises to the cytoplasm. It carries out the reaction L-glutamate + ATP = L-glutamyl 5-phosphate + ADP. Its pathway is amino-acid biosynthesis; L-proline biosynthesis; L-glutamate 5-semialdehyde from L-glutamate: step 1/2. Catalyzes the transfer of a phosphate group to glutamate to form L-glutamate 5-phosphate. The chain is Glutamate 5-kinase from Geobacter metallireducens (strain ATCC 53774 / DSM 7210 / GS-15).